Here is a 233-residue protein sequence, read N- to C-terminus: MADS-box transcription factor 20 (233 aa).

Positions 1 to 61 constitute an MADS-box domain; the sequence is MGRGKVQVRR…GNLFHYASSH (61 aa). A K-box domain is found at 91-184; the sequence is EGSMSYDHIK…PTKAAAPPAC (94 aa).

In terms of tissue distribution, expressed in developing seeds and seedling shoots.

It localises to the nucleus. Functionally, probable transcription factor. The protein is MADS-box transcription factor 20 (MADS20) of Oryza sativa subsp. japonica (Rice).